Reading from the N-terminus, the 122-residue chain is Large ribosomal subunit protein uL14 (122 aa).

The protein belongs to the universal ribosomal protein uL14 family. Part of the 50S ribosomal subunit. Forms a cluster with proteins L3 and L19. In the 70S ribosome, L14 and L19 interact and together make contacts with the 16S rRNA in bridges B5 and B8.

Functionally, binds to 23S rRNA. Forms part of two intersubunit bridges in the 70S ribosome. In Streptococcus thermophilus (strain CNRZ 1066), this protein is Large ribosomal subunit protein uL14.